The chain runs to 318 residues: NADH-ubiquinone oxidoreductase chain 1 (318 aa).

The next 8 helical transmembrane spans lie at 5 to 25 (IISSFLTFVMILIAVAFLTLI), 69 to 89 (SIFLFILAPALAISLALILWI), 102 to 122 (LGLMFILAISSLSVYSLLTSG), 148 to 168 (LGLMIVALTILSGGFDLKLFI), 174 to 194 (IWLLFPMWPIFLMWFISTLAE), 215 to 235 (VEFSGGLFALFFLAEYANILF), 253 to 273 (LYFSASMTMKTMFLIFLFLWV), and 293 to 313 (FLPITLSLLIFQFSMSLFFGV).

It belongs to the complex I subunit 1 family.

The protein resides in the mitochondrion inner membrane. It catalyses the reaction a ubiquinone + NADH + 5 H(+)(in) = a ubiquinol + NAD(+) + 4 H(+)(out). Functionally, core subunit of the mitochondrial membrane respiratory chain NADH dehydrogenase (Complex I) that is believed to belong to the minimal assembly required for catalysis. Complex I functions in the transfer of electrons from NADH to the respiratory chain. The immediate electron acceptor for the enzyme is believed to be ubiquinone. The sequence is that of NADH-ubiquinone oxidoreductase chain 1 (MT-ND1) from Myxine glutinosa (Atlantic hagfish).